A 338-amino-acid chain; its full sequence is Glycerol-3-phosphate dehydrogenase [NAD(P)+] (338 aa).

NADPH-binding residues include Ser14, Tyr15, His35, and Lys109. Sn-glycerol 3-phosphate-binding residues include Lys109, Gly138, and Thr140. Residue Ala142 coordinates NADPH. Residues Lys194, Asp247, Ser257, Arg258, and Asn259 each coordinate sn-glycerol 3-phosphate. Lys194 (proton acceptor) is an active-site residue. Arg258 lines the NADPH pocket. NADPH contacts are provided by Val282 and Glu284.

The protein belongs to the NAD-dependent glycerol-3-phosphate dehydrogenase family.

It localises to the cytoplasm. The catalysed reaction is sn-glycerol 3-phosphate + NAD(+) = dihydroxyacetone phosphate + NADH + H(+). It carries out the reaction sn-glycerol 3-phosphate + NADP(+) = dihydroxyacetone phosphate + NADPH + H(+). It participates in membrane lipid metabolism; glycerophospholipid metabolism. In terms of biological role, catalyzes the reduction of the glycolytic intermediate dihydroxyacetone phosphate (DHAP) to sn-glycerol 3-phosphate (G3P), the key precursor for phospholipid synthesis. This Shewanella oneidensis (strain ATCC 700550 / JCM 31522 / CIP 106686 / LMG 19005 / NCIMB 14063 / MR-1) protein is Glycerol-3-phosphate dehydrogenase [NAD(P)+].